The chain runs to 255 residues: MLLVFDVGNTNIVMGIYKGKKLLHSFRISTEKSKTSDEYGMLINQLFEYNGLKLKDVDAVIISSVVPPIMHTLESMTIKYCNTKPLIVGPGIKTGINIKYDNPKEVGADRIVNAVAAYEIYGGPVIVIDFGTATTFCAISKNCEYLGGIIAPGLAISADALFQRTAKLPKIELTKPSTVICKNTVSSMQSGIIYGHVGMVDYIVSRMKEEFAPNAYVVATGGFARMIAEESKTINTVNDMLTLEGLRIIYERNAD.

ATP is bound at residue 6-13 (DVGNTNIV). Substrate contacts are provided by residues Y100 and 107–110 (GADR). D109 serves as the catalytic Proton acceptor. A K(+)-binding site is contributed by D129. Residue T132 coordinates ATP. T184 is a substrate binding site.

It belongs to the type III pantothenate kinase family. Homodimer. NH4(+) is required as a cofactor. Requires K(+) as cofactor.

It is found in the cytoplasm. It catalyses the reaction (R)-pantothenate + ATP = (R)-4'-phosphopantothenate + ADP + H(+). It functions in the pathway cofactor biosynthesis; coenzyme A biosynthesis; CoA from (R)-pantothenate: step 1/5. Functionally, catalyzes the phosphorylation of pantothenate (Pan), the first step in CoA biosynthesis. The sequence is that of Type III pantothenate kinase from Thermoanaerobacter sp. (strain X514).